The primary structure comprises 505 residues: Flagellin (505 aa).

It belongs to the bacterial flagellin family.

It localises to the secreted. It is found in the bacterial flagellum. Functionally, flagellin is the subunit protein which polymerizes to form the filaments of bacterial flagella. This chain is Flagellin (fliC), found in Salmonella muenchen.